The following is a 242-amino-acid chain: Probable transcriptional regulatory protein Bcen2424_2294 (242 aa).

Belongs to the TACO1 family.

It is found in the cytoplasm. The sequence is that of Probable transcriptional regulatory protein Bcen2424_2294 from Burkholderia cenocepacia (strain HI2424).